The chain runs to 177 residues: UPF0178 protein TP_0845 (177 aa).

The tract at residues 155 to 177 is disordered; it reads EAKTGEEQCDWPSAQGKSQTGRR.

This sequence belongs to the UPF0178 family.

The chain is UPF0178 protein TP_0845 from Treponema pallidum (strain Nichols).